An 82-amino-acid chain; its full sequence is Conotoxin MiK42 (82 aa).

The first 22 residues, 1 to 22, serve as a signal peptide directing secretion; the sequence is MKLTCALIVAMLLLTACQLITT. Residues 23–49 constitute a propeptide that is removed on maturation; sequence DDFRGRQQYRTARSRTKMQNYKIFRLT. 3 disulfides stabilise this stretch: C52/C67, C59/C70, and C66/C80.

The protein belongs to the conotoxin O1 superfamily. In terms of tissue distribution, expressed by the venom duct.

The protein resides in the secreted. This chain is Conotoxin MiK42, found in Conus miles (Soldier cone).